The chain runs to 56 residues: Large ribosomal subunit protein bL32 (56 aa).

Residues 1 to 29 form a disordered region; it reads MAVQQNKPSRSKRGMRRSHDALTTSSVSV.

This sequence belongs to the bacterial ribosomal protein bL32 family.

The chain is Large ribosomal subunit protein bL32 from Pectobacterium atrosepticum (strain SCRI 1043 / ATCC BAA-672) (Erwinia carotovora subsp. atroseptica).